We begin with the raw amino-acid sequence, 140 residues long: MAVTRTFSIIKPDATRRNLTGAVTKMLEDAGLRVVASKRIHMTREQAEGFYAVHKERPFFGELVEFMISGPVVVQVLEGEDAVKRNRDVMGATNPADAAEGTIRKTFAESIEANSVHGSDSDENAATEIAYFFKPEEIVG.

ATP is bound by residues K11, F59, R87, T93, R104, and N114. H117 (pros-phosphohistidine intermediate) is an active-site residue.

It belongs to the NDK family. As to quaternary structure, homotetramer. Requires Mg(2+) as cofactor.

Its subcellular location is the cytoplasm. The enzyme catalyses a 2'-deoxyribonucleoside 5'-diphosphate + ATP = a 2'-deoxyribonucleoside 5'-triphosphate + ADP. It catalyses the reaction a ribonucleoside 5'-diphosphate + ATP = a ribonucleoside 5'-triphosphate + ADP. Functionally, major role in the synthesis of nucleoside triphosphates other than ATP. The ATP gamma phosphate is transferred to the NDP beta phosphate via a ping-pong mechanism, using a phosphorylated active-site intermediate. The protein is Nucleoside diphosphate kinase of Sphingopyxis alaskensis (strain DSM 13593 / LMG 18877 / RB2256) (Sphingomonas alaskensis).